The sequence spans 351 residues: ADP-glucose phosphorylase (351 aa).

Positions 1-63 are disordered; sequence MTSPSHASDR…QNPNPKPSSC (63 aa). 41-44 contacts ADP-alpha-D-glucose; it reads RAKR. Zn(2+) contacts are provided by Cys63 and Cys66. Residues 72-74 and Asn94 contribute to the ADP-alpha-D-glucose site; that span reads ECA. Zn(2+) is bound at residue His133. ADP-alpha-D-glucose contacts are provided by residues Asn173 and 179–182; that span reads GASM. Residue His184 participates in Zn(2+) binding. Catalysis depends on His186, which acts as the Tele-AMP-histidine intermediate. Gln188 lines the ADP-alpha-D-glucose pocket. 4 residues coordinate Zn(2+): Cys216, Cys219, His255, and His310. ADP-alpha-D-glucose-binding positions include Gly321 and 325-326; that span reads FE.

It belongs to the galactose-1-phosphate uridylyltransferase type 1 family. Homodimer. Zn(2+) serves as cofactor.

It catalyses the reaction alpha-D-glucose 1-phosphate + ADP + H(+) = ADP-alpha-D-glucose + phosphate. In terms of biological role, catalyzes the conversion of ADP-glucose and inorganic phosphate (Pi) into glucose-1-phosphate and ADP. Does not possess galactose-1-phosphate uridylyltransferase activity. The sequence is that of ADP-glucose phosphorylase from Arabidopsis thaliana (Mouse-ear cress).